The sequence spans 172 residues: Histone H1-like protein HC2 (172 aa).

The segment at Met-1–Lys-77 is disordered. A compositionally biased stretch (basic residues) spans Gln-8–Lys-77.

The protein belongs to the histone H1/H5 family. HCT subfamily.

In terms of biological role, might have a role in establishing the nucleoid structure of elementary bodies. The protein is Histone H1-like protein HC2 (hctB) of Chlamydia pneumoniae (Chlamydophila pneumoniae).